A 777-amino-acid polypeptide reads, in one-letter code: Isoamylase (777 aa).

Residues 1-32 (MDPHAPQRQRSGQRLRALALAALACALSPAHA) form the signal peptide. Residues Asp-162, Glu-263, Thr-264, Asn-266, and Asp-293 each contribute to the Ca(2+) site. Catalysis depends on Asp-410, which acts as the Nucleophile. An intrachain disulfide couples Cys-419 to Cys-423. The active-site Proton donor is Glu-458.

Belongs to the glycosyl hydrolase 13 family. In terms of assembly, monomer. Ca(2+) serves as cofactor.

It carries out the reaction Hydrolysis of (1-&gt;6)-alpha-D-glucosidic branch linkages in glycogen, amylopectin and their beta-limit dextrins.. In terms of biological role, has a high rate of hydrolysis for glycogen. Does not cleave pullulan. In Flavobacterium sp, this protein is Isoamylase (iam).